The primary structure comprises 263 residues: 3-methyl-2-oxobutanoate hydroxymethyltransferase (263 aa).

Mg(2+)-binding residues include D45 and D84. 3-methyl-2-oxobutanoate is bound by residues 45–46, D84, and K112; that span reads DS. Residue E114 coordinates Mg(2+). E180 functions as the Proton acceptor in the catalytic mechanism.

The protein belongs to the PanB family. Homodecamer; pentamer of dimers. Requires Mg(2+) as cofactor.

It is found in the cytoplasm. It catalyses the reaction 3-methyl-2-oxobutanoate + (6R)-5,10-methylene-5,6,7,8-tetrahydrofolate + H2O = 2-dehydropantoate + (6S)-5,6,7,8-tetrahydrofolate. The protein operates within cofactor biosynthesis; (R)-pantothenate biosynthesis; (R)-pantoate from 3-methyl-2-oxobutanoate: step 1/2. Its function is as follows. Catalyzes the reversible reaction in which hydroxymethyl group from 5,10-methylenetetrahydrofolate is transferred onto alpha-ketoisovalerate to form ketopantoate. This chain is 3-methyl-2-oxobutanoate hydroxymethyltransferase, found in Salmonella arizonae (strain ATCC BAA-731 / CDC346-86 / RSK2980).